Here is a 195-residue protein sequence, read N- to C-terminus: Nuclear transcription factor Y subunit C-10 (195 aa).

The interval 1–24 is disordered; the sequence is MRRPKSSHVRMEPVAPRSHNTMPM.

It belongs to the NFYC/HAP5 subunit family. As to quaternary structure, heterotrimeric transcription factor composed of three components, NF-YA, NF-YB and NF-YC. NF-YB and NF-YC must interact and dimerize for NF-YA association and DNA binding.

It is found in the nucleus. Its function is as follows. Stimulates the transcription of various genes by recognizing and binding to a CCAAT motif in promoters. The chain is Nuclear transcription factor Y subunit C-10 (NFYC10) from Arabidopsis thaliana (Mouse-ear cress).